Consider the following 249-residue polypeptide: Ubiquinone/menaquinone biosynthesis C-methyltransferase UbiE (249 aa).

S-adenosyl-L-methionine contacts are provided by residues threonine 72, aspartate 93, and 121 to 122 (NA).

It belongs to the class I-like SAM-binding methyltransferase superfamily. MenG/UbiE family.

It catalyses the reaction a 2-demethylmenaquinol + S-adenosyl-L-methionine = a menaquinol + S-adenosyl-L-homocysteine + H(+). The catalysed reaction is a 2-methoxy-6-(all-trans-polyprenyl)benzene-1,4-diol + S-adenosyl-L-methionine = a 5-methoxy-2-methyl-3-(all-trans-polyprenyl)benzene-1,4-diol + S-adenosyl-L-homocysteine + H(+). Its pathway is quinol/quinone metabolism; menaquinone biosynthesis; menaquinol from 1,4-dihydroxy-2-naphthoate: step 2/2. It functions in the pathway cofactor biosynthesis; ubiquinone biosynthesis. In terms of biological role, methyltransferase required for the conversion of demethylmenaquinol (DMKH2) to menaquinol (MKH2) and the conversion of 2-polyprenyl-6-methoxy-1,4-benzoquinol (DDMQH2) to 2-polyprenyl-3-methyl-6-methoxy-1,4-benzoquinol (DMQH2). This is Ubiquinone/menaquinone biosynthesis C-methyltransferase UbiE from Hahella chejuensis (strain KCTC 2396).